We begin with the raw amino-acid sequence, 450 residues long: 23S rRNA (uracil(1939)-C(5))-methyltransferase RlmD (450 aa).

Positions 81, 87, 90, and 173 each coordinate [4Fe-4S] cluster. Residues Q276, F305, N310, E326, D353, and D372 each coordinate S-adenosyl-L-methionine. The Nucleophile role is filled by C402.

Belongs to the class I-like SAM-binding methyltransferase superfamily. RNA M5U methyltransferase family. RlmD subfamily.

The enzyme catalyses uridine(1939) in 23S rRNA + S-adenosyl-L-methionine = 5-methyluridine(1939) in 23S rRNA + S-adenosyl-L-homocysteine + H(+). Functionally, catalyzes the formation of 5-methyl-uridine at position 1939 (m5U1939) in 23S rRNA. The protein is 23S rRNA (uracil(1939)-C(5))-methyltransferase RlmD of Idiomarina loihiensis (strain ATCC BAA-735 / DSM 15497 / L2-TR).